The sequence spans 454 residues: Pup--protein ligase (454 aa).

Glutamate 9 serves as a coordination point for Mg(2+). Residue arginine 53 coordinates ATP. Tyrosine 55 is a Mg(2+) binding site. Aspartate 57 serves as the catalytic Proton acceptor. Residue glutamate 63 coordinates Mg(2+). Threonine 66 and tryptophan 421 together coordinate ATP.

This sequence belongs to the Pup ligase/Pup deamidase family. Pup-conjugating enzyme subfamily.

The enzyme catalyses ATP + [prokaryotic ubiquitin-like protein]-L-glutamate + [protein]-L-lysine = ADP + phosphate + N(6)-([prokaryotic ubiquitin-like protein]-gamma-L-glutamyl)-[protein]-L-lysine.. It functions in the pathway protein degradation; proteasomal Pup-dependent pathway. Its pathway is protein modification; protein pupylation. Catalyzes the covalent attachment of the prokaryotic ubiquitin-like protein modifier Pup to the proteasomal substrate proteins, thereby targeting them for proteasomal degradation. This tagging system is termed pupylation. The ligation reaction involves the side-chain carboxylate of the C-terminal glutamate of Pup and the side-chain amino group of a substrate lysine. In Frankia casuarinae (strain DSM 45818 / CECT 9043 / HFP020203 / CcI3), this protein is Pup--protein ligase.